The following is a 328-amino-acid chain: COP9 signalosome complex subunit 6 (328 aa).

Residues 42–175 (VALHPLVILN…VSVFESVIDI (134 aa)) form the MPN domain.

This sequence belongs to the peptidase M67A family. CSN6 subfamily. As to quaternary structure, component of the CSN complex, composed of COPS1/GPS1, COPS2, COPS3, COPS4, COPS5, COPS6, COPS7 (COPS7A or COPS7B), COPS8 and COPS9. In the complex, it probably interacts directly with COPS2, COPS4, COPS5, COPS7 (COPS7A or COPS7B) and COPS9. Interacts with the translation initiation factor EIF3S6. Interacts weakly with RBX1. Directly interacts with COP1 and 14-3-3 protein sigma/SFN. Interacts with ERCC6.

It localises to the cytoplasm. It is found in the nucleus. Functionally, component of the COP9 signalosome complex (CSN), a complex involved in various cellular and developmental processes. The CSN complex is an essential regulator of the ubiquitin (Ubl) conjugation pathway by mediating the deneddylation of the cullin subunits of SCF-type E3 ligase complexes, leading to decrease the Ubl ligase activity of SCF-type complexes such as SCF, CSA or DDB2. The complex is also involved in phosphorylation of p53/TP53, c-jun/JUN, IkappaBalpha/NFKBIA, ITPK1 and IRF8, possibly via its association with CK2 and PKD kinases. CSN-dependent phosphorylation of TP53 and JUN promotes and protects degradation by the Ubl system, respectively. Has some glucocorticoid receptor-responsive activity. Stabilizes COP1 through reducing COP1 auto-ubiquitination and decelerating COP1 turnover rate, hence regulates the ubiquitination of COP1 targets, including SFN. In Pongo abelii (Sumatran orangutan), this protein is COP9 signalosome complex subunit 6 (COPS6).